Consider the following 415-residue polypeptide: MLPTAVLLVLAVSVAARDNATCDGPCGLRFRQKLESGMRVVGGMSAEPGAWPWMVSLQIFMYHNNRRYHTCGGILLNSHWVLTAAHCFKNKKKVTDWRLIFGANEVVWGSNKPVKPPLQERFVEEIIIHEKYVSGLEINDIALIKITPPVPCGPFIGPGCLPQFKAGPPRAPQTCWVTGWGYLKEKGPRTSPTLQEARVALIDLELCNSTRWYNGRIRSTNVCAGYPRGKIDTCQGDSGGPLMCRDRAENTFVVVGITSWGVGCARAKRPGVYTSTWPYLNWIASKIGSNALQMVQLGTPPRPSTPAPPVRPPSVQTPVRPPWYFQRPPGPSQQPGSRPRPPAPPPAPPPPPPPPPPPPPPPPPPPQQVSAKPPQALSFAKRLQQLIEALKGTAFSSGRSYYETETTDLQELPAS.

Residues 1–16 (MLPTAVLLVLAVSVAA) form the signal peptide. N-linked (GlcNAc...) asparagine glycosylation is present at Asn-19. 6 cysteine pairs are disulfide-bonded: Cys-22–Cys-152, Cys-26–Cys-160, Cys-71–Cys-87, Cys-175–Cys-244, Cys-207–Cys-223, and Cys-234–Cys-264. The Peptidase S1 domain occupies 40-288 (VVGGMSAEPG…YLNWIASKIG (249 aa)). Catalysis depends on charge relay system residues His-86 and Asp-140. Asn-208 carries N-linked (GlcNAc...) asparagine glycosylation. Ser-238 acts as the Charge relay system in catalysis. Disordered stretches follow at residues 296 to 376 (QLGT…PPQA) and 395 to 415 (FSSG…LPAS). Pro residues-rich tracts occupy residues 300-312 (PPRP…PVRP) and 328-367 (PPGP…PPPQ). A propeptide spans 339 to 415 (PRPPAPPPAP…TTDLQELPAS (77 aa)) (pro-rich). Polar residues predominate over residues 395–409 (FSSGRSYYETETTDL).

Belongs to the peptidase S1 family. Heavy chain (catalytic) and a light chain linked by two disulfide bonds. Forms a heterodimer with SERPINA5.

It carries out the reaction Preferential cleavage: Arg-|-Xaa, Lys-|-Xaa.. With respect to regulation, inhibited by SERPINA5. Functionally, acrosin is the major protease of mammalian spermatozoa. It is a serine protease of trypsin-like cleavage specificity, it is synthesized in a zymogen form, proacrosin and stored in the acrosome. The polypeptide is Acrosin (ACR) (Sus scrofa (Pig)).